We begin with the raw amino-acid sequence, 423 residues long: Serine hydroxymethyltransferase (423 aa).

Residues Leu120 and 124–126 (GHL) contribute to the (6S)-5,6,7,8-tetrahydrofolate site. Position 229 is an N6-(pyridoxal phosphate)lysine (Lys229). 353 to 355 (SPF) lines the (6S)-5,6,7,8-tetrahydrofolate pocket.

This sequence belongs to the SHMT family. Homodimer. The cofactor is pyridoxal 5'-phosphate.

It is found in the cytoplasm. It carries out the reaction (6R)-5,10-methylene-5,6,7,8-tetrahydrofolate + glycine + H2O = (6S)-5,6,7,8-tetrahydrofolate + L-serine. The protein operates within one-carbon metabolism; tetrahydrofolate interconversion. It functions in the pathway amino-acid biosynthesis; glycine biosynthesis; glycine from L-serine: step 1/1. In terms of biological role, catalyzes the reversible interconversion of serine and glycine with tetrahydrofolate (THF) serving as the one-carbon carrier. This reaction serves as the major source of one-carbon groups required for the biosynthesis of purines, thymidylate, methionine, and other important biomolecules. Also exhibits THF-independent aldolase activity toward beta-hydroxyamino acids, producing glycine and aldehydes, via a retro-aldol mechanism. The polypeptide is Serine hydroxymethyltransferase (Prochlorococcus marinus (strain MIT 9515)).